The chain runs to 753 residues: Pesticidal crystal protein Cry20Aa (753 aa).

Residues 680–696 are compositionally biased toward polar residues; sequence DTTYQPSYDNYNQNASG. A disordered region spans residues 680–721; that stretch reads DTTYQPSYDNYNQNASGTYDDGYNPNASDSYDQSYTNNYSQN. The span at 712 to 721 shows a compositional bias: low complexity; that stretch reads QSYTNNYSQN.

The protein belongs to the delta endotoxin family. Has low mosquitocidal activity probably due to rapid proteolysis to inactive 56 kDa and 43 kDa proteins.

Promotes colloidosmotic lysis by binding to the midgut epithelial cells of mosquitos. Active against Aedes aegypti and Culex quinquefasciatus larvae. This Bacillus thuringiensis subsp. fukuokaensis protein is Pesticidal crystal protein Cry20Aa (cry20Aa).